Consider the following 196-residue polypeptide: Large ribosomal subunit protein bL9 (196 aa).

The protein belongs to the bacterial ribosomal protein bL9 family.

Its function is as follows. Binds to the 23S rRNA. This chain is Large ribosomal subunit protein bL9, found in Gluconobacter oxydans (strain 621H) (Gluconobacter suboxydans).